A 337-amino-acid chain; its full sequence is Phosphate acyltransferase (337 aa).

It belongs to the PlsX family. In terms of assembly, homodimer. Probably interacts with PlsY.

The protein resides in the cytoplasm. The enzyme catalyses a fatty acyl-[ACP] + phosphate = an acyl phosphate + holo-[ACP]. The protein operates within lipid metabolism; phospholipid metabolism. Catalyzes the reversible formation of acyl-phosphate (acyl-PO(4)) from acyl-[acyl-carrier-protein] (acyl-ACP). This enzyme utilizes acyl-ACP as fatty acyl donor, but not acyl-CoA. The polypeptide is Phosphate acyltransferase (Listeria monocytogenes serotype 4b (strain F2365)).